A 377-amino-acid chain; its full sequence is Chaperone protein DnaJ (377 aa).

The 66-residue stretch at 5–70 (DYYEVLGVSR…DKKAAYDQFG (66 aa)) folds into the J domain. A CR-type zinc finger spans residues 133–211 (GLTKELRIPT…CHGDGRVEKS (79 aa)). Cysteine 146, cysteine 149, cysteine 163, cysteine 166, cysteine 185, cysteine 188, cysteine 199, and cysteine 202 together coordinate Zn(2+). CXXCXGXG motif repeat units lie at residues 146–153 (CDLCEGSG), 163–170 (CGTCHGQG), 185–192 (CPTCHGRG), and 199–206 (CTKCHGDG).

This sequence belongs to the DnaJ family. In terms of assembly, homodimer. It depends on Zn(2+) as a cofactor.

Its subcellular location is the cytoplasm. In terms of biological role, participates actively in the response to hyperosmotic and heat shock by preventing the aggregation of stress-denatured proteins and by disaggregating proteins, also in an autonomous, DnaK-independent fashion. Unfolded proteins bind initially to DnaJ; upon interaction with the DnaJ-bound protein, DnaK hydrolyzes its bound ATP, resulting in the formation of a stable complex. GrpE releases ADP from DnaK; ATP binding to DnaK triggers the release of the substrate protein, thus completing the reaction cycle. Several rounds of ATP-dependent interactions between DnaJ, DnaK and GrpE are required for fully efficient folding. Also involved, together with DnaK and GrpE, in the DNA replication of plasmids through activation of initiation proteins. This is Chaperone protein DnaJ from Shewanella baltica (strain OS223).